Reading from the N-terminus, the 236-residue chain is Phosphatidylserine decarboxylase proenzyme (236 aa).

Residue Ser-194 is the Schiff-base intermediate with substrate; via pyruvic acid of the active site. Ser-194 carries the pyruvic acid (Ser); by autocatalysis modification.

The protein belongs to the phosphatidylserine decarboxylase family. PSD-A subfamily. As to quaternary structure, heterodimer of a large membrane-associated beta subunit and a small pyruvoyl-containing alpha subunit. Pyruvate is required as a cofactor. In terms of processing, is synthesized initially as an inactive proenzyme. Formation of the active enzyme involves a self-maturation process in which the active site pyruvoyl group is generated from an internal serine residue via an autocatalytic post-translational modification. Two non-identical subunits are generated from the proenzyme in this reaction, and the pyruvate is formed at the N-terminus of the alpha chain, which is derived from the carboxyl end of the proenzyme. The post-translation cleavage follows an unusual pathway, termed non-hydrolytic serinolysis, in which the side chain hydroxyl group of the serine supplies its oxygen atom to form the C-terminus of the beta chain, while the remainder of the serine residue undergoes an oxidative deamination to produce ammonia and the pyruvoyl prosthetic group on the alpha chain.

Its subcellular location is the cell membrane. It carries out the reaction a 1,2-diacyl-sn-glycero-3-phospho-L-serine + H(+) = a 1,2-diacyl-sn-glycero-3-phosphoethanolamine + CO2. It participates in phospholipid metabolism; phosphatidylethanolamine biosynthesis; phosphatidylethanolamine from CDP-diacylglycerol: step 2/2. Its function is as follows. Catalyzes the formation of phosphatidylethanolamine (PtdEtn) from phosphatidylserine (PtdSer). This is Phosphatidylserine decarboxylase proenzyme from Rhodospirillum rubrum (strain ATCC 11170 / ATH 1.1.1 / DSM 467 / LMG 4362 / NCIMB 8255 / S1).